Reading from the N-terminus, the 500-residue chain is FAD-linked oxidoreductase srdI (500 aa).

The signal sequence occupies residues 1–20 (MHLSSSLLFTSALLAGGINA). N47 carries N-linked (GlcNAc...) asparagine glycosylation. The region spanning 69–241 (YRPPSYQAAI…TQATYKMHKS (173 aa)) is the FAD-binding PCMH-type domain. Residues N257 and N282 are each glycosylated (N-linked (GlcNAc...) asparagine).

It belongs to the oxygen-dependent FAD-linked oxidoreductase family. The cofactor is FAD.

Functionally, FAD-linked oxidoreductase; part of the gene cluster that mediates the biosynthesis of sordarial, a salicylic aldehyde structurally related to the phytotoxin pyriculol. The most interesting aspect of this pathway is formation of an aromatic product from the highly reducing polyketide synthase srdA. SrdA synthesizes a reduced polyketide chain from one molecule of acetyl-CoA and five molecules of malonyl-CoA. The polyketide chain is then reductively released as an aldehyde. The oxidoreductases srdC, srdD and srdE then oxidize one of the hydroxy groups to facilitate the intramolecular aldol condensation, followed by dehydration to yield a salicylic aldehyde. This aldehyde can undergo facile reduction by endogenous reductases to yield the alcohol 1-hydroxy-2-hydroxymethyl-3-pent-1,3-dienylbenzene. The flavin-dependent srdI counteract against the propensity of the aldehydes to be reduced under physiological conditions and is responsible for reoxidizing 1-hydroxy-2-hydroxymethyl-3-pent-1,3-dienylbenzene back to the salicylic aldehyde. This salicylic aldehyde is then selectively epoxidized by the cupin-domain-containing oxidoreductase srdB to yield the epoxide, which can be hydrolyzed stereoselectively by the hydrolase srdG to give the final product sordarial. This chain is FAD-linked oxidoreductase srdI, found in Neurospora crassa (strain ATCC 24698 / 74-OR23-1A / CBS 708.71 / DSM 1257 / FGSC 987).